The primary structure comprises 375 residues: Trichodiene synthase (375 aa).

It belongs to the trichodiene synthase family.

The catalysed reaction is (2E,6E)-farnesyl diphosphate = trichodiene + diphosphate. It participates in sesquiterpene biosynthesis; trichothecene biosynthesis. TS is a member of the terpene cyclase group of enzymes. It catalyzes the isomerization and cyclization of farnesyl pyro-phosphate to form trichodiene, the first cyclic intermediate in the biosynthetic pathway for trichothecenes. It serves to branch trichothecene biosynthesis from the isoprenoid pathway. The chain is Trichodiene synthase (TRI5) from Fusarium boothii.